The sequence spans 167 residues: MQYNGTARKVGDHIDTDAIIPARFLVTTDPAQLGANCMEGLEHGWVSRVQQGDIMVGGKNFGCGSSREHAPIAILGAGMPVVVAHSFARIFYRNGFNMGLILIEIGDDADRIHDGDVLSVDVENGRITNHTTGDVISCPPLPPFMHDILDKGGLVPYVRERLAAGDA.

Belongs to the LeuD family. LeuD type 2 subfamily. Heterodimer of LeuC and LeuD.

The enzyme catalyses (2R,3S)-3-isopropylmalate = (2S)-2-isopropylmalate. Its pathway is amino-acid biosynthesis; L-leucine biosynthesis; L-leucine from 3-methyl-2-oxobutanoate: step 2/4. In terms of biological role, catalyzes the isomerization between 2-isopropylmalate and 3-isopropylmalate, via the formation of 2-isopropylmaleate. The protein is 3-isopropylmalate dehydratase small subunit of Oleidesulfovibrio alaskensis (strain ATCC BAA-1058 / DSM 17464 / G20) (Desulfovibrio alaskensis).